Here is a 307-residue protein sequence, read N- to C-terminus: uncharacterized protein (307 aa).

This is an uncharacterized protein from Saccharum officinarum (Sugarcane).